The primary structure comprises 78 residues: Serine--glyoxylate aminotransferase (78 aa).

Belongs to the class-V pyridoxal-phosphate-dependent aminotransferase family. In terms of assembly, homodimer. Requires pyridoxal 5'-phosphate as cofactor. As to expression, expressed in leaves but not in root tissue or seedlings.

Its subcellular location is the peroxisome. The enzyme catalyses glyoxylate + L-serine = 3-hydroxypyruvate + glycine. It carries out the reaction glyoxylate + L-alanine = glycine + pyruvate. With respect to regulation, inhibited by aminooxyacetate. The polypeptide is Serine--glyoxylate aminotransferase (Triticum aestivum (Wheat)).